Here is a 175-residue protein sequence, read N- to C-terminus: uncharacterized protein (175 aa).

Residues 1 to 11 (METWRKGSFRN) constitute a mitochondrion transit peptide. The segment at 29–48 (QGSILSQASTAGGDHEEYSN) is disordered.

It is found in the mitochondrion. This is an uncharacterized protein from Mus musculus (Mouse).